The primary structure comprises 90 residues: Acylphosphatase (90 aa).

Residues 3–90 form the Acylphosphatase-like domain; the sequence is NYKIIVFGTV…KTYNDFSVTY (88 aa). Catalysis depends on residues arginine 18 and asparagine 36.

This sequence belongs to the acylphosphatase family.

It catalyses the reaction an acyl phosphate + H2O = a carboxylate + phosphate + H(+). This Ligilactobacillus salivarius (strain UCC118) (Lactobacillus salivarius) protein is Acylphosphatase (acyP).